Here is a 433-residue protein sequence, read N- to C-terminus: Staphylopine synthase (433 aa).

NADP(+)-binding positions include 9 to 12 (TGPV), Arg33, 37 to 40 (SEKS), and Asp99. The active-site Proton donor/acceptor is the His216.

The protein belongs to the staphylopine dehydrogenase family. In terms of assembly, homodimer.

It carries out the reaction staphylopine + NADP(+) + H2O = (2S)-2-amino-4-{[(1R)-1-carboxy-2-(1H-imidazol-4-yl)ethyl]amino}butanoate + pyruvate + NADPH + H(+). Functionally, catalyzes the NADPH-dependent reductive condensation of pyruvate to the intermediate formed by the adjacently encoded enzyme CntL, namely (2S)-2-amino-4-{[(1R)-1-carboxy-2-(1H-imidazol-4-yl)ethyl]amino}butanoate, leading to the production of staphylopine. This is the last step in the biosynthesis of the metallophore staphylopine, which is involved in the acquisition of nickel, cobalt, zinc, copper, and iron, and thus enables bacterial growth inside the host, where metal access is limited. Therefore, this enzyme probably contributes to staphylococcal virulence. Can use neither NADH nor alpha-ketoglutarate in place of NADPH and pyruvate, respectively. In Staphylococcus aureus (strain Mu50 / ATCC 700699), this protein is Staphylopine synthase.